The chain runs to 169 residues: NAD(P)H-quinone oxidoreductase subunit J, chloroplastic (169 aa).

Belongs to the complex I 30 kDa subunit family. As to quaternary structure, NDH is composed of at least 16 different subunits, 5 of which are encoded in the nucleus.

The protein localises to the plastid. It localises to the chloroplast thylakoid membrane. It catalyses the reaction a plastoquinone + NADH + (n+1) H(+)(in) = a plastoquinol + NAD(+) + n H(+)(out). It carries out the reaction a plastoquinone + NADPH + (n+1) H(+)(in) = a plastoquinol + NADP(+) + n H(+)(out). In terms of biological role, NDH shuttles electrons from NAD(P)H:plastoquinone, via FMN and iron-sulfur (Fe-S) centers, to quinones in the photosynthetic chain and possibly in a chloroplast respiratory chain. The immediate electron acceptor for the enzyme in this species is believed to be plastoquinone. Couples the redox reaction to proton translocation, and thus conserves the redox energy in a proton gradient. This is NAD(P)H-quinone oxidoreductase subunit J, chloroplastic from Zygnema circumcarinatum (Green alga).